The sequence spans 416 residues: MMNGFSIANVQGYEIIDSRGNLTVRARVTLESGIRATGDAPSGASKGTREAVELRDKDGSVKGAVDSINYYISPALMGLDVREQGKIDRIMIELDGTENKSRLGANATIATSIAVAKTASISMGLEPFMYIGGARTHTLPVPLLNILNGGLHAGNMLKIQEFMVIPVKFDTLKEALIASTKIYKTLKSLVTERYGKIYTALGDEGGISPPLSVTEDALKLVHEAIKRSGMEGRVFMGMDAAASDFYNPEKGVYEIDNTSKSPDEMIEFYVDIASRYPLLYLEDPFEENDFSRYSELQSRIKNVIVTGDDLFTTNVRYLRKGIEMKSARGVIVKANQIGTLTETIQFFDLAKDNSIKTVVSHRSGETEDSFIADLAVGLNSDFIKTGAPSRGERTSKYNRLLEIENEFGLEYLGRRL.

Glutamine 160 is a (2R)-2-phosphoglycerate binding site. Residue glutamate 204 is the Proton donor of the active site. Mg(2+) is bound by residues aspartate 239, glutamate 282, and aspartate 308. (2R)-2-phosphoglycerate is bound by residues lysine 333, arginine 362, serine 363, and lysine 384. The active-site Proton acceptor is lysine 333.

Belongs to the enolase family. The cofactor is Mg(2+).

It localises to the cytoplasm. It is found in the secreted. Its subcellular location is the cell surface. It carries out the reaction (2R)-2-phosphoglycerate = phosphoenolpyruvate + H2O. It functions in the pathway carbohydrate degradation; glycolysis; pyruvate from D-glyceraldehyde 3-phosphate: step 4/5. Catalyzes the reversible conversion of 2-phosphoglycerate (2-PG) into phosphoenolpyruvate (PEP). It is essential for the degradation of carbohydrates via glycolysis. This is Enolase from Metallosphaera sedula (strain ATCC 51363 / DSM 5348 / JCM 9185 / NBRC 15509 / TH2).